The chain runs to 372 residues: Glutamate 5-kinase (372 aa).

An ATP-binding site is contributed by Lys14. Substrate is bound by residues Ser54, Asp141, and Asn153. 173-174 is a binding site for ATP; it reads TD. Residues 280–358 enclose the PUA domain; the sequence is RGNVTLDEGA…DEIESLLGYI (79 aa).

The protein belongs to the glutamate 5-kinase family.

The protein resides in the cytoplasm. It carries out the reaction L-glutamate + ATP = L-glutamyl 5-phosphate + ADP. Its pathway is amino-acid biosynthesis; L-proline biosynthesis; L-glutamate 5-semialdehyde from L-glutamate: step 1/2. Its function is as follows. Catalyzes the transfer of a phosphate group to glutamate to form L-glutamate 5-phosphate. In Nitrosospira multiformis (strain ATCC 25196 / NCIMB 11849 / C 71), this protein is Glutamate 5-kinase.